The following is a 98-amino-acid chain: Integration host factor subunit alpha (98 aa).

The segment at Phe49 to Ile71 is disordered.

This sequence belongs to the bacterial histone-like protein family. Heterodimer of an alpha and a beta chain.

This protein is one of the two subunits of integration host factor, a specific DNA-binding protein that functions in genetic recombination as well as in transcriptional and translational control. The protein is Integration host factor subunit alpha of Pectobacterium atrosepticum (strain SCRI 1043 / ATCC BAA-672) (Erwinia carotovora subsp. atroseptica).